A 267-amino-acid polypeptide reads, in one-letter code: Small ribosomal subunit protein uS2 (267 aa).

Residues 224 to 267 are disordered; the sequence is GRQGEDQVDEKTFEGQKSEAAEGDKKTADNSMEDIVNAVEGDNK. The segment covering 225–251 has biased composition (basic and acidic residues); sequence RQGEDQVDEKTFEGQKSEAAEGDKKTA.

The protein belongs to the universal ribosomal protein uS2 family.

The protein is Small ribosomal subunit protein uS2 of Levilactobacillus brevis (strain ATCC 367 / BCRC 12310 / CIP 105137 / JCM 1170 / LMG 11437 / NCIMB 947 / NCTC 947) (Lactobacillus brevis).